Reading from the N-terminus, the 391-residue chain is Cdc42 effector protein 1 (391 aa).

2 positions are modified to phosphoserine: Ser19 and Ser27. The residue at position 34 (Thr34) is a Phosphothreonine. The region spanning 38–52 (ISHPLGDFRHTMHVG) is the CRIB domain. Residue Ser39 is modified to Phosphoserine. The residue at position 53 (Arg53) is an Omega-N-methylarginine. Ser65, Ser73, Ser77, Ser101, Ser113, Ser121, and Ser139 each carry phosphoserine. A disordered region spans residues 163-189 (ISRLPRSEKPHDRDRDGSFPSEPGLRR). The span at 167-179 (PRSEKPHDRDRDG) shows a compositional bias: basic and acidic residues. A phosphoserine mark is found at Ser180, Ser190, Ser192, and Ser195. A run of 8 repeats spans residues 220-226 (PAAETPA), 227-233 (PAANPPA), 234-240 (PTANPTG), 241-247 (PAANPPA), 248-254 (TTANPPA), 255-261 (PAANPSA), 262-268 (PAATPTG), and 269-275 (PAANPPA). Residues 220 to 275 (PAAETPAPAANPPAPTANPTGPAANPPATTANPPAPAANPSAPAATPTGPAANPPA) are 8 X 7 AA tandem repeats of [PT]-[AT]-A-[ENT]-[PT]-[PTS]-[AG]. Positions 221-338 (AAETPAPAAN…HHYPEMDARQ (118 aa)) are disordered. Residues 236 to 270 (ANPTGPAANPPATTANPPAPAANPSAPAATPTGPA) are compositionally biased toward low complexity. The residue at position 303 (Ser303) is a Phosphoserine. Basic and acidic residues predominate over residues 327-338 (GGHHYPEMDARQ). Phosphoserine is present on residues Ser350 and Ser353. The tract at residues 354 to 391 (LDEEWRAPQAGSRTPVPSTVQANTFEFADAEEDDEVKV) is disordered. Over residues 364–377 (GSRTPVPSTVQANT) the composition is skewed to polar residues. Residues 381 to 391 (ADAEEDDEVKV) show a composition bias toward acidic residues.

It belongs to the BORG/CEP family. Interacts with RHOQ and CDC42, in a GTP-dependent manner. In terms of tissue distribution, endothelial and bone marrow stromal cells.

The protein localises to the endomembrane system. Its subcellular location is the cytoplasm. It is found in the cytoskeleton. Its function is as follows. Probably involved in the organization of the actin cytoskeleton. Induced membrane extensions in fibroblasts. In Homo sapiens (Human), this protein is Cdc42 effector protein 1 (CDC42EP1).